The following is an 874-amino-acid chain: Valine--tRNA ligase (874 aa).

The short motif at 46-56 (PNVTGHLHIGH) is the 'HIGH' region element. The 'KMSKS' region motif lies at 523–527 (KMSKS). K526 contacts ATP. A coiled-coil region spans residues 805–874 (DYVFQMKKAS…TLTDLKQKVK (70 aa)).

It belongs to the class-I aminoacyl-tRNA synthetase family. ValS type 1 subfamily. As to quaternary structure, monomer.

The protein localises to the cytoplasm. The enzyme catalyses tRNA(Val) + L-valine + ATP = L-valyl-tRNA(Val) + AMP + diphosphate. Catalyzes the attachment of valine to tRNA(Val). As ValRS can inadvertently accommodate and process structurally similar amino acids such as threonine, to avoid such errors, it has a 'posttransfer' editing activity that hydrolyzes mischarged Thr-tRNA(Val) in a tRNA-dependent manner. This chain is Valine--tRNA ligase, found in Ureaplasma parvum serovar 3 (strain ATCC 700970).